A 574-amino-acid chain; its full sequence is Septation ring formation regulator EzrA (574 aa).

Topologically, residues 1–7 are extracellular; the sequence is MSSGIIL. The chain crosses the membrane as a helical span at residues 8 to 26; the sequence is LIVAIVLLVIIAYLVGVII. The Cytoplasmic segment spans residues 27–574; sequence RKRNDSLITS…YEKTREHIRF (548 aa). Coiled coils occupy residues 102 to 141, 274 to 350, and 459 to 520; these read NFIRAKHEINSVESQLNLVEEDIASIREALNILKEQEEKN, ELVT…ETES, and QLEA…SFEA.

The protein belongs to the EzrA family.

The protein resides in the cell membrane. Its function is as follows. Negative regulator of FtsZ ring formation; modulates the frequency and position of FtsZ ring formation. Inhibits FtsZ ring formation at polar sites. Interacts either with FtsZ or with one of its binding partners to promote depolymerization. The sequence is that of Septation ring formation regulator EzrA from Streptococcus pyogenes serotype M1.